The primary structure comprises 146 residues: Heat-stable 19 kDa antigen (146 aa).

The first 20 residues, 1 to 20, serve as a signal peptide directing secretion; it reads MKFSLLSAIAAAVFVPFTSA.

Belongs to the cerato-platanin family. Post-translationally, glycosylated.

It localises to the secreted. The sequence is that of Heat-stable 19 kDa antigen (CSA) from Coccidioides immitis (strain RS) (Valley fever fungus).